Consider the following 396-residue polypeptide: CCA-adding enzyme (396 aa).

ATP is bound by residues glycine 27 and arginine 30. Glycine 27 and arginine 30 together coordinate CTP. Residues aspartate 40 and aspartate 42 each contribute to the Mg(2+) site. ATP is bound by residues arginine 111, aspartate 154, arginine 157, arginine 160, and arginine 163. The CTP site is built by arginine 111, aspartate 154, arginine 157, arginine 160, and arginine 163.

This sequence belongs to the tRNA nucleotidyltransferase/poly(A) polymerase family. Bacterial CCA-adding enzyme type 3 subfamily. Homodimer. It depends on Mg(2+) as a cofactor.

The enzyme catalyses a tRNA precursor + 2 CTP + ATP = a tRNA with a 3' CCA end + 3 diphosphate. It carries out the reaction a tRNA with a 3' CCA end + 2 CTP + ATP = a tRNA with a 3' CCACCA end + 3 diphosphate. Catalyzes the addition and repair of the essential 3'-terminal CCA sequence in tRNAs without using a nucleic acid template. Adds these three nucleotides in the order of C, C, and A to the tRNA nucleotide-73, using CTP and ATP as substrates and producing inorganic pyrophosphate. tRNA 3'-terminal CCA addition is required both for tRNA processing and repair. Also involved in tRNA surveillance by mediating tandem CCA addition to generate a CCACCA at the 3' terminus of unstable tRNAs. While stable tRNAs receive only 3'-terminal CCA, unstable tRNAs are marked with CCACCA and rapidly degraded. The protein is CCA-adding enzyme of Bacillus velezensis (strain DSM 23117 / BGSC 10A6 / LMG 26770 / FZB42) (Bacillus amyloliquefaciens subsp. plantarum).